Here is a 61-residue protein sequence, read N- to C-terminus: Sec-independent protein translocase protein TatA (61 aa).

A helical membrane pass occupies residues methionine 1 to glycine 21.

The protein belongs to the TatA/E family. The Tat system comprises two distinct complexes: a TatABC complex, containing multiple copies of TatA, TatB and TatC subunits, and a separate TatA complex, containing only TatA subunits. Substrates initially bind to the TatABC complex, which probably triggers association of the separate TatA complex to form the active translocon.

The protein resides in the cell inner membrane. Part of the twin-arginine translocation (Tat) system that transports large folded proteins containing a characteristic twin-arginine motif in their signal peptide across membranes. TatA could form the protein-conducting channel of the Tat system. The sequence is that of Sec-independent protein translocase protein TatA from Geobacter metallireducens (strain ATCC 53774 / DSM 7210 / GS-15).